A 403-amino-acid polypeptide reads, in one-letter code: Ribose-phosphate pyrophosphokinase 1, chloroplastic (403 aa).

The transit peptide at 1–49 directs the protein to the chloroplast; that stretch reads MASLGLSFPPAAKTPTYLASSSSTFFSNSSLSVRTSQFRSRNSVFACVK. Asp217, His219, Asp228, and Asp232 together coordinate Mg(2+). The tract at residues 303 to 318 is binding of phosphoribosylpyrophosphate; sequence GKVAIMVDDMIDTAGT.

Belongs to the ribose-phosphate pyrophosphokinase family. Mg(2+) is required as a cofactor.

It is found in the plastid. It localises to the chloroplast. It carries out the reaction D-ribose 5-phosphate + ATP = 5-phospho-alpha-D-ribose 1-diphosphate + AMP + H(+). The polypeptide is Ribose-phosphate pyrophosphokinase 1, chloroplastic (PRS1) (Arabidopsis thaliana (Mouse-ear cress)).